Consider the following 421-residue polypeptide: Queuine tRNA-ribosyltransferase accessory subunit 2 (421 aa).

Residues Cys-328, Cys-330, Cys-333, and His-359 each contribute to the Zn(2+) site.

Belongs to the queuine tRNA-ribosyltransferase family. QTRT2 subfamily. As to quaternary structure, heterodimer of a catalytic subunit and an accessory subunit. Requires Zn(2+) as cofactor.

It localises to the cytoplasm. Functionally, non-catalytic subunit of the queuine tRNA-ribosyltransferase (TGT) that catalyzes the base-exchange of a guanine (G) residue with queuine (Q) at position 34 (anticodon wobble position) in tRNAs with GU(N) anticodons (tRNA-Asp, -Asn, -His and -Tyr), resulting in the hypermodified nucleoside queuosine (7-(((4,5-cis-dihydroxy-2-cyclopenten-1-yl)amino)methyl)-7-deazaguanosine). The protein is Queuine tRNA-ribosyltransferase accessory subunit 2 of Aedes aegypti (Yellowfever mosquito).